The sequence spans 78 residues: Small ribosomal subunit protein bS18 (78 aa).

It belongs to the bacterial ribosomal protein bS18 family. As to quaternary structure, part of the 30S ribosomal subunit. Forms a tight heterodimer with protein bS6.

Functionally, binds as a heterodimer with protein bS6 to the central domain of the 16S rRNA, where it helps stabilize the platform of the 30S subunit. This is Small ribosomal subunit protein bS18 from Rhodospirillum rubrum (strain ATCC 11170 / ATH 1.1.1 / DSM 467 / LMG 4362 / NCIMB 8255 / S1).